The following is an 89-amino-acid chain: Large ribosomal subunit protein bL27 (89 aa).

The disordered stretch occupies residues 1-20; sequence MAHKKAGGSSRNGRDSAGRR.

The protein belongs to the bacterial ribosomal protein bL27 family.

The sequence is that of Large ribosomal subunit protein bL27 from Jannaschia sp. (strain CCS1).